Consider the following 464-residue polypeptide: Phospho-cellobiase (464 aa).

Glutamate 172 (proton donor) is an active-site residue. Residue glutamate 361 is the Nucleophile of the active site.

This sequence belongs to the glycosyl hydrolase 1 family.

This chain is Phospho-cellobiase (casB), found in Klebsiella oxytoca.